The primary structure comprises 130 residues: Small ribosomal subunit protein uS9 (130 aa).

The protein belongs to the universal ribosomal protein uS9 family.

The sequence is that of Small ribosomal subunit protein uS9 from Clostridium beijerinckii (strain ATCC 51743 / NCIMB 8052) (Clostridium acetobutylicum).